The chain runs to 380 residues: Glucose-1-phosphate adenylyltransferase (380 aa).

Alpha-D-glucose 1-phosphate is bound by residues glycine 164, 179 to 180, and serine 190; that span reads EK.

Belongs to the bacterial/plant glucose-1-phosphate adenylyltransferase family. Homotetramer.

It carries out the reaction alpha-D-glucose 1-phosphate + ATP + H(+) = ADP-alpha-D-glucose + diphosphate. The protein operates within glycan biosynthesis; glycogen biosynthesis. Functionally, involved in the biosynthesis of ADP-glucose, a building block required for the elongation reactions to produce glycogen. Catalyzes the reaction between ATP and alpha-D-glucose 1-phosphate (G1P) to produce pyrophosphate and ADP-Glc. This Lactococcus lactis subsp. cremoris (strain MG1363) protein is Glucose-1-phosphate adenylyltransferase.